Consider the following 108-residue polypeptide: DNA-binding protein HBbu (108 aa).

The protein belongs to the bacterial histone-like protein family.

Its function is as follows. Histone-like DNA-binding protein which is capable of wrapping DNA to stabilize it, and thus to prevent its denaturation under extreme environmental conditions. The sequence is that of DNA-binding protein HBbu (hbb) from Borrelia parkeri.